Here is a 132-residue protein sequence, read N- to C-terminus: Vesicle transport protein GOT1A (132 aa).

Topologically, residues 1 to 16 (MISITEWQKIGVGTTG) are cytoplasmic. A helical membrane pass occupies residues 17-37 (FGIFFILFGMLLYFDSVLLAF). Residues 38 to 39 (GN) are Lumenal-facing. Residues 40–60 (LLFLTGLSLIIGLRRTFSFFF) form a helical membrane-spanning segment. The Cytoplasmic segment spans residues 61–68 (QRHKFKGT). Residues 69–89 (SFFLGGVVIVLLRWPLLGMCL) form a helical membrane-spanning segment. Residues 90 to 100 (ETYGFFSLFRG) lie on the Lumenal side of the membrane. A helical transmembrane segment spans residues 101-121 (FFPVAFGFLGSASNIPFLSAL). Over 122 to 132 (FQRLQGTSSMV) the chain is Cytoplasmic.

This sequence belongs to the GOT1 family.

It is found in the golgi apparatus membrane. Functionally, may be involved in fusion of ER-derived transport vesicles with the Golgi complex. This is Vesicle transport protein GOT1A from Bos taurus (Bovine).